Here is a 1276-residue protein sequence, read N- to C-terminus: MTWPVKDFNYSDPVNDNDILYLRIPQNKLITTPVKAFMITQNIWVIPERFSSDTNPSLSKPPRPTSKYQSYYDPSYLSTDEQKDTFLKGIIKLFKRINERDIGKKLINYLVVGSPFMGDSSTPEDTFDFTRHTTNIAVEKFENGSWKVTNIITPSVLIFGPLPNILDYTASLTLQGQQSNPSFEGFGTLSILKVAPEFLLTFSDVTSNQSSAVLGKSIFCMDPVIALMHELTHSLHQLYGINIPSDKRIRPQVSEGFFSQDGPNVQFEELYTFGGLDVEIIPQIERSQLREKALGHYKDIAKRLNNINKTIPSSWISNIDKYKKIFSEKYNFDKDNTGNFVVNIDKFNSLYSDLTNVMSEVVYSSQYNVKNRTHYFSRHYLPVFANILDDNIYTIRDGFNLTNKGFNIENSGQNIERNPALQKLSSESVVDLFTKVCLRLTKNSRDDSTCIKVKNNRLPYVADKDSISQEIFENKIITDETNVQNYSDKFSLDESILDGQVPINPEIVDPLLPNVNMEPLNLPGEEIVFYDDITKYVDYLNSYYYLESQKLSNNVENITLTTSVEEALGYSNKIYTFLPSLAEKVNKGVQAGLFLNWANEVVEDFTTNIMKKDTLDKISDVSVIIPYIGPALNIGNSALRGNFNQAFATAGVAFLLEGFPEFTIPALGVFTFYSSIQEREKIIKTIENCLEQRVKRWKDSYQWMVSNWLSRITTQFNHINYQMYDSLSYQADAIKAKIDLEYKKYSGSDKENIKSQVENLKNSLDVKISEAMNNINKFIRECSVTYLFKNMLPKVIDELNKFDLRTKTELINLIDSHNIILVGEVDRLKAKVNESFENTMPFNIFSYTNNSLLKDIINEYFNSINDSKILSLQNKKNALVDTSGYNAEVRVGDNVQLNTIYTNDFKLSSSGDKIIVNLNNNILYSAIYENSSVSFWIKISKDLTNSHNEYTIINSIEQNSGWKLCIRNGNIEWILQDVNRKYKSLIFDYSESLSHTGYTNKWFFVTITNNIMGYMKLYINGELKQSQKIEDLDEVKLDKTIVFGIDENIDENQMLWIRDFNIFSKELSNEDINIVYEGQILRNVIKDYWGNPLKFDTEYYIINDNYIDRYIAPESNVLVLVQYPDRSKLYTGNPITIKSVSDKNPYSRILNGDNIILHMLYNSRKYMIIRDTDTIYATQGGECSQNCVYALKLQSNLGNYGIGIFSIKNIVSKNKYCSQIFSSFRENTMLLADIYKPWRFSFKNAYTPVAVTNYETKLLSTSSFWKFISRDPGWVE.

His-229 is a Zn(2+) binding site. Glu-230 is a catalytic residue. Zn(2+) is bound by residues His-233 and Glu-269. A disulfide bond links Cys-437 and Cys-450. Residues 443-862 (NSRDDSTCIK…LKDIINEYFN (420 aa)) form a translocation domain (TD) region. Positions 458-547 (LPYVADKDSI…DYLNSYYYLE (90 aa)) are belt. Positions 863–1082 (SINDSKILSL…NIVYEGQILR (220 aa)) are N-terminus of receptor binding domain (N-RBD), Hcn. A C-terminus of receptor binding domain (C-RBD), Hcc region spans residues 1083–1276 (NVIKDYWGNP…FISRDPGWVE (194 aa)). Residues Thr-1172, Asp-1173, Lys-1192, and Arg-1239 each coordinate N-acetyl-beta-neuraminate. Residues 1235–1245 (YKPWRFSFKNA) form a ganglioside-binding loop region. Positions 1252-1255 (TNYE) match the Host ganglioside-binding motif motif.

It belongs to the peptidase M27 family. In terms of assembly, heterodimer; disulfide-linked heterodimer of a light chain (LC) and a heavy chain (HC). The LC has the proteolytic/pharmacological activity. The N- and C-termini of the HC mediate channel formation and eukaryotic host cell binding, respectively. Can also be purified in complex with a non-toxic component that is larger than the HC. Single chain toxin from strain D-4947 copurifies with NTHNA, and in complexes that include NTNHA, HA-70, HA-33 and HA-17. Dichain toxin from strain CB-16 phage d-16 phi copurifies with NTHNA, and in complexes that include NTNHA, HA-55, HA-33, HA-22 and HA-17. The stoichiometry of the whole complex has been modeled as one BoNT/D, one NTNHA, three HA-70, six HA-33 and three HA-17. HC interacts with eukaryotic protein synaptic vesicle glycoprotein 2B (SV2B), which may serve as its receptor. Another group does not find a convincing interaction with SV2. The cofactor is Zn(2+).

It is found in the secreted. It carries out the reaction Limited hydrolysis of proteins of the neuroexocytosis apparatus, synaptobrevins, SNAP25 or syntaxin. No detected action on small molecule substrates.. With respect to regulation, inhibited by dipicolinic acid, captopril, 1,10-phenanthroline and EDTA. Botulinum toxin causes flaccid paralysis by inhibiting neurotransmitter (acetylcholine) release from the presynaptic membranes of nerve terminals of the eukaryotic host skeletal and autonomic nervous system, with frequent heart or respiratory failure. Precursor of botulinum neurotoxin D for which a proteinaceous coreceptor is controversial. In double SV2A/SV2B knockout mice this toxin does not degrade its synaptobrevin target; introducing SV2A, SV2B or SV2C restores target cleavage. Recognition of SV2 by this toxin does not occur via SV2 glycosylation or its large extracellular loop 4. Another group does not find a convincing interaction with SV2. Thus a protein receptor for this BoNT serotype has yet to be definitively proven. Recognizes at least 1 complex polysialylated ganglioside found on neural tissue. Electrical stimulation increases uptake of toxin in an ex vivo assay, presumably by transiently exposing a receptor usually found in eukaryotic target synaptic vesicles. Upon synaptic vesicle recycling the toxin is taken up via the endocytic pathway; when the pH of the toxin-containing endosome drops a structural rearrangement occurs so that the N-terminus of the heavy chain (HC) forms pores that allows the light chain (LC) to translocate into the cytosol. Once in the cytosol the disulfide bond linking the 2 subunits is reduced and LC cleaves its target protein on synaptic vesicles, preventing their fusion with the cytoplasmic membrane and thus neurotransmitter release. Requires complex eukaryotic host polysialogangliosides for full neurotoxicity and for binding to neurons. Its function is as follows. Has proteolytic activity. After translocation into the eukaryotic host cytosol, inhibits neurotransmitter release by acting as a zinc endopeptidase that cleaves the '61-Lys-|-Leu-62' bond of synaptobrevin-1 (VAMP1), and the equivalent 'Lys-|-Leu' sites in VAMP2 and VAMP3. Cleaves the '49-Lys-|-Ile-50' bond of A.californica synaptobrevin (AC P35589). This chain probably has to be partially unfolded to translocate into the eukaryotic host cell cytosol. In terms of biological role, responsible for host epithelial cell transcytosis, host nerve cell targeting and translocation of light chain (LC) into eukaryotic host cell cytosol. Composed of 3 subdomains; the translocation domain (TD), and N-terminus and C-terminus of the receptor-binding domain (RBD). The RBD is responsible for the adherence of the toxin to the eukaryotic target cell surface. The N-terminus of the TD wraps an extended belt around the perimeter of the LC, protecting Zn(2+) in the active site; it may also prevent premature LC dissociation from the translocation channel and protect toxin prior to translocation. The TD inserts into synaptic vesicle membrane to allow translocation into the host cytosol. The RBD binds eukaryotic host phosphatidylethanolamine, which may serve as toxin receptor. Treatment of synaptosomes with proteinase K does not reduce HC binding, suggesting there is no protein receptor or it is protected from extracellular proteases. HC significantly decreases uptake and toxicity of whole BoNT/D. HC also interferes with uptake of tetanus toxin. Has 2 closely located carbohydrate-binding receptor sites and binds at least 1 GT1b ganglioside. Bind gangliosides in the order GD2 &gt; GT1b &gt; GD1b. Interacts with eukaryotic target protein SV2B (synaptic vesicle glycoprotein 2B). Expression of SV2A, SV2B or SV2C in mice knocked-out for the SV2 proteins restores entry of BoNT/D and cleavage of VAMP2, suggesting SV2 acts as its receptor. Unlike BoNT/A and BoNT/E, toxin uptake is not mediated by large extracellular loop 4 of SV2. Another group finds very poor interaction with SV2 proteins, suggesting the possible protein receptor may not have been identified. The chain is Botulinum neurotoxin type D (botD) from Clostridium botulinum (Clostridium botulinum D bacteriophage).